Here is a 59-residue protein sequence, read N- to C-terminus: MSADVKVTLVRSHIGKASSVKAVLVGMGLTKRQKSVTLKDTPEVRGMINKVRHLLKVEE.

Belongs to the universal ribosomal protein uL30 family. Part of the 50S ribosomal subunit.

The chain is Large ribosomal subunit protein uL30 from Geotalea uraniireducens (strain Rf4) (Geobacter uraniireducens).